Consider the following 353-residue polypeptide: tRNA-specific 2-thiouridylase MnmA 2 (353 aa).

ATP-binding positions include 9–16 (AMSGGVDS) and Met35. The Nucleophile role is filled by Cys98. Cys98 and Cys194 are disulfide-bonded. Gly122 provides a ligand contact to ATP. The segment at 144-146 (KDQ) is interaction with tRNA. Catalysis depends on Cys194, which acts as the Cysteine persulfide intermediate. An interaction with tRNA region spans residues 300–301 (RY).

Belongs to the MnmA/TRMU family.

The protein localises to the cytoplasm. The catalysed reaction is S-sulfanyl-L-cysteinyl-[protein] + uridine(34) in tRNA + AH2 + ATP = 2-thiouridine(34) in tRNA + L-cysteinyl-[protein] + A + AMP + diphosphate + H(+). Its function is as follows. Catalyzes the 2-thiolation of uridine at the wobble position (U34) of tRNA, leading to the formation of s(2)U34. In Clostridium botulinum (strain ATCC 19397 / Type A), this protein is tRNA-specific 2-thiouridylase MnmA 2.